Reading from the N-terminus, the 154-residue chain is 6,7-dimethyl-8-ribityllumazine synthase (154 aa).

Residues Trp22, 56–58, and 80–82 contribute to the 5-amino-6-(D-ribitylamino)uracil site; these read SHE and AVI. 85 to 86 provides a ligand contact to (2S)-2-hydroxy-3-oxobutyl phosphate; sequence DT. His88 serves as the catalytic Proton donor. Phe113 lines the 5-amino-6-(D-ribitylamino)uracil pocket. Arg127 serves as a coordination point for (2S)-2-hydroxy-3-oxobutyl phosphate.

This sequence belongs to the DMRL synthase family.

It carries out the reaction (2S)-2-hydroxy-3-oxobutyl phosphate + 5-amino-6-(D-ribitylamino)uracil = 6,7-dimethyl-8-(1-D-ribityl)lumazine + phosphate + 2 H2O + H(+). It participates in cofactor biosynthesis; riboflavin biosynthesis; riboflavin from 2-hydroxy-3-oxobutyl phosphate and 5-amino-6-(D-ribitylamino)uracil: step 1/2. In terms of biological role, catalyzes the formation of 6,7-dimethyl-8-ribityllumazine by condensation of 5-amino-6-(D-ribitylamino)uracil with 3,4-dihydroxy-2-butanone 4-phosphate. This is the penultimate step in the biosynthesis of riboflavin. The sequence is that of 6,7-dimethyl-8-ribityllumazine synthase from Deinococcus geothermalis (strain DSM 11300 / CIP 105573 / AG-3a).